The sequence spans 139 residues: MSVVKEFREFIARGNVIDLAVGVIIGAAFNGIVKSLVDQVIMPPIGLLTGGLDFSKLEWVLRPEDPASEAIEKVAIQYGAFVNTVIQFFIVATVVFLLVKLVNEIRRQDAAEPAPAAPPAPTAEETLLTEIRDLLAKKG.

The next 2 helical transmembrane spans lie at 16–36 (VIDL…VKSL) and 79–99 (GAFV…FLLV).

Belongs to the MscL family. As to quaternary structure, homopentamer.

The protein resides in the cell inner membrane. Its function is as follows. Channel that opens in response to stretch forces in the membrane lipid bilayer. May participate in the regulation of osmotic pressure changes within the cell. The sequence is that of Large-conductance mechanosensitive channel from Caulobacter vibrioides (strain ATCC 19089 / CIP 103742 / CB 15) (Caulobacter crescentus).